The sequence spans 243 residues: Small ribosomal subunit protein uS3 (243 aa).

Alanine 2 is subject to N-acetylalanine. Phosphoserine is present on residues serine 6 and serine 35. A KH type-2 domain is found at leucine 21 to alanine 92. Threonine 42 carries the post-translational modification Phosphothreonine. Position 62 is an N6-acetyllysine (lysine 62). Asymmetric dimethylarginine is present on residues arginine 64, arginine 65, and arginine 67. Threonine 70 is subject to Phosphothreonine. A Glycyl lysine isopeptide (Lys-Gly) (interchain with G-Cter in ubiquitin) cross-link involves residue lysine 90. Residue serine 104 is modified to Phosphoserine. Lysine 132 is subject to N6-succinyllysine. Positions proline 200–alanine 243 are disordered. A Glycyl lysine isopeptide (Lys-Gly) (interchain with G-Cter in ubiquitin) cross-link involves residue lysine 202. At serine 209 the chain carries Phosphoserine. A Glycyl lysine isopeptide (Lys-Gly) (interchain with G-Cter in SUMO2); alternate cross-link involves residue lysine 214. Lysine 214 is covalently cross-linked (Glycyl lysine isopeptide (Lys-Gly) (interchain with G-Cter in ubiquitin); alternate). Residues threonine 220 and threonine 221 each carry the phosphothreonine modification. Serine 224 bears the Phosphoserine mark. A Glycyl lysine isopeptide (Lys-Gly) (interchain with G-Cter in SUMO2) cross-link involves residue lysine 230. The span at proline 231–alanine 243 shows a compositional bias: pro residues. Threonine 242 is subject to Phosphothreonine.

This sequence belongs to the universal ribosomal protein uS3 family. In terms of assembly, component of the 40S small ribosomal subunit. Identified in a IGF2BP1-dependent mRNP granule complex containing untranslated mRNAs. Interacts with HNRPD. Interacts with PRMT1; the interaction methylates RPS3. Interacts with SUMO1; the interaction sumoylates RPS3. Interacts with UBC9. Interacts with CDK1; the interaction phosphorylates RPS3. Interacts with PRKCD; the interaction phosphorylates RPS3. Interacts with PKB/AKT; the interaction phosphorylates RPS3. Interacts with E2F1; the interaction occurs in the absence of nerve growth factor and increases transcription of pro-apoptotic proteins BCL2L11/BIM and HRK/Dp5. Interacts with the base excision repair proteins APEX1 and OGG1; interaction with OGG1 increases OGG1 N-glycosylase activity. Interacts with UNG; the interaction increases the uracil excision activity of UNG1. Interacts with HSP90; the interaction prevents the ubiquitination and proteasome-dependent degradation of RPS3 and is suppressed by increased ROS levels. Interacts with TOM70; the interaction promotes translocation of RPS3 to the mitochondrion. Interacts (via N-terminus) with RELA (via N-terminus); the interaction enhances the DNA-binding activity of the NF-kappa-B p65-p50 complex. Interacts with NFKBIA; the interaction is direct and may bridge the interaction between RPS3 and RELA. Interacts with IKKB; the interaction phosphorylates RPS3 and enhances its translocation to the nucleus. Interacts (via KH domain) with MDM2 and TP53. Interacts with TRADD. Interacts with ASCC3. Identified in a HCV IRES-mediated translation complex, at least composed of EIF3C, IGF2BP1, RPS3 and HCV RNA-replicon. Interacts with CRY1. In terms of processing, methylation by PRMT1 is required for import into the nucleolus and for ribosome assembly. Post-translationally, sumoylation by SUMO1 enhances protein stability through increased resistance to proteolysis. Sumoylation occurs at one or more of the three consensus sites, Lys-18, Lys-214 and Lys-230. Phosphorylation at Thr-221 by CDK1 occurs mainly in G2/M phase. Phosphorylation by PRKCD occurs on a non-ribosomal-associated form which results in translocation of RPS3 to the nucleus and enhances its endonuclease activity. Phosphorylated on Ser-209 by IKKB in response to activation of the NF-kappa-B p65-p50 complex which enhances the association of RPS3 with importin-alpha and mediates the nuclear translocation of RPS3. Phosphorylation by MAPK is required for translocation to the nucleus following exposure of cells to DNA damaging agents such as hydrogen peroxide. Phosphorylation by PKB/AKT mediates RPS3 nuclear translocation, enhances RPS3 endonuclease activity and suppresses RPS3-induced neuronal apoptosis. In terms of processing, ubiquitinated; ubiquitination is prevented by interaction with HSP90 which stabilizes the protein. Monoubiquitinated at Lys-214 by RNF10 and ZNF598 when a ribosome has stalled during translation of poly(A) sequences, leading to preclude synthesis of a long poly-lysine tail and initiate the ribosome quality control (RQC) pathway to degrade the potentially detrimental aberrant nascent polypeptide. Deubiquitinated at Lys-214 by USP10, preventing degradation by the proteasome and promoting 40S ribosome subunit recycling following ribosome dissociation. Post-translationally, ufmylated by UFL1.

It localises to the cytoplasm. It is found in the nucleus. The protein localises to the nucleolus. Its subcellular location is the mitochondrion inner membrane. The protein resides in the cytoskeleton. It localises to the spindle. The catalysed reaction is 2'-deoxyribonucleotide-(2'-deoxyribose 5'-phosphate)-2'-deoxyribonucleotide-DNA = a 3'-end 2'-deoxyribonucleotide-(2,3-dehydro-2,3-deoxyribose 5'-phosphate)-DNA + a 5'-end 5'-phospho-2'-deoxyribonucleoside-DNA + H(+). With respect to regulation, endonuclease activity is inhibited by MgCl2 on apurinic/apyrimidinic DNA but not on UV-irradiated DNA. Component of the small ribosomal subunit. The ribosome is a large ribonucleoprotein complex responsible for the synthesis of proteins in the cell. Has endonuclease activity and plays a role in repair of damaged DNA. Cleaves phosphodiester bonds of DNAs containing altered bases with broad specificity and cleaves supercoiled DNA more efficiently than relaxed DNA. Displays high binding affinity for 7,8-dihydro-8-oxoguanine (8-oxoG), a common DNA lesion caused by reactive oxygen species (ROS). Has also been shown to bind with similar affinity to intact and damaged DNA. Stimulates the N-glycosylase activity of the base excision protein OGG1. Enhances the uracil excision activity of UNG1. Also stimulates the cleavage of the phosphodiester backbone by APEX1. When located in the mitochondrion, reduces cellular ROS levels and mitochondrial DNA damage. Has also been shown to negatively regulate DNA repair in cells exposed to hydrogen peroxide. Plays a role in regulating transcription as part of the NF-kappa-B p65-p50 complex where it binds to the RELA/p65 subunit, enhances binding of the complex to DNA and promotes transcription of target genes. Represses its own translation by binding to its cognate mRNA. Binds to and protects TP53/p53 from MDM2-mediated ubiquitination. Involved in spindle formation and chromosome movement during mitosis by regulating microtubule polymerization. Involved in induction of apoptosis through its role in activation of CASP8. Induces neuronal apoptosis by interacting with the E2F1 transcription factor and acting synergistically with it to up-regulate pro-apoptotic proteins BCL2L11/BIM and HRK/Dp5. Interacts with TRADD following exposure to UV radiation and induces apoptosis by caspase-dependent JNK activation. This chain is Small ribosomal subunit protein uS3 (RPS3), found in Oryctolagus cuniculus (Rabbit).